The chain runs to 479 residues: NADH oxidase (479 aa).

Residues glycine 8–alanine 12, aspartate 33, cysteine 43, valine 80, alanine 111–alanine 114, lysine 149, and tyrosine 177 contribute to the FAD site. Histidine 11 functions as the Proton acceptor in the catalytic mechanism. Residue cysteine 43 is the Redox-active of the active site. The residue at position 43 (cysteine 43) is a Cysteine sulfinic acid (-SO2H). Residues valine 170–alanine 185, aspartate 197, and glycine 264 contribute to the NAD(+) site. Residues leucine 295–glycine 305, leucine 322, alanine 323, and threonine 324 contribute to the FAD site. Alanine 353 lines the NAD(+) pocket. Phenylalanine 450 serves as a coordination point for FAD.

It belongs to the class-III pyridine nucleotide-disulfide oxidoreductase family. FAD is required as a cofactor.

It carries out the reaction 2 NADH + O2 + 2 H(+) = 2 NAD(+) + 2 H2O. Catalyzes the four-electron reduction of molecular oxygen to water. The polypeptide is NADH oxidase (nox) (Mycoplasma pneumoniae (strain ATCC 29342 / M129 / Subtype 1) (Mycoplasmoides pneumoniae)).